Consider the following 130-residue polypeptide: Organic solute transporter subunit beta (130 aa).

The Extracellular segment spans residues 1–35 (MNYSEKLTGAPPMTEVPLELLEEMLWFFRVEDATP). The helical transmembrane segment at 36-56 (WNCSMFVLAALVAIISFILLG) threads the bilayer. Residues 57–130 (RNIQANRNQK…HLPDPQEPES (74 aa)) are Cytoplasmic-facing. The disordered stretch occupies residues 99–130 (LSEKPTLAQGEMEAKCSDVPRVHLPDPQEPES). Residues 110–124 (MEAKCSDVPRVHLPD) show a composition bias toward basic and acidic residues.

The protein belongs to the OST-beta family. Interacts with SLC51A. The Ost-alpha/Ost-beta complex is a heterodimer composed of alpha (SLC51A) and beta (SLC51B) subunit; induces the transport of SLC51A from the endoplasmic reticulum to the plasma membrane.

It is found in the cell membrane. The enzyme catalyses taurocholate(out) = taurocholate(in). It carries out the reaction estrone 3-sulfate(out) = estrone 3-sulfate(in). The catalysed reaction is dehydroepiandrosterone 3-sulfate(out) = dehydroepiandrosterone 3-sulfate(in). It catalyses the reaction tauroursodeoxycholate(out) = tauroursodeoxycholate(in). The enzyme catalyses glycoursodeoxycholate(out) = glycoursodeoxycholate(in). It carries out the reaction glycocholate(out) = glycocholate(in). The catalysed reaction is taurochenodeoxycholate(out) = taurochenodeoxycholate(in). It catalyses the reaction glycochenodeoxycholate(out) = glycochenodeoxycholate(in). The enzyme catalyses taurodeoxycholate(out) = taurodeoxycholate(in). It carries out the reaction glycodeoxycholate(out) = glycodeoxycholate(in). The catalysed reaction is prostaglandin E2(out) = prostaglandin E2(in). Its function is as follows. Essential component of the Ost-alpha/Ost-beta complex, a heterodimer that acts as the intestinal basolateral transporter responsible for bile acid export from enterocytes into portal blood. The Ost-alpha/Ost-beta complex efficiently transports the major species of bile acids (taurocholate). Taurine conjugates are transported more efficiently across the basolateral membrane than glycine-conjugated bile acids. Can also transport steroids such as estrone 3-sulfate and dehydroepiandrosterone 3-sulfate, therefore playing a role in the enterohepatic circulation of sterols. Able to transport eicosanoids such as prostaglandin E2. Modulates SLC51A glycosylation, membrane trafficking and stability activities. This chain is Organic solute transporter subunit beta (SLC51B), found in Bos taurus (Bovine).